A 372-amino-acid chain; its full sequence is NAD(P)H-quinone oxidoreductase subunit 1 (372 aa).

Helical transmembrane passes span 27 to 47 (LLWL…GVLV), 97 to 117 (LLFT…WLII), 128 to 148 (VGIG…GLLM), 176 to 196 (LALA…IDIV), 204 to 224 (FLSW…ICAL), 270 to 290 (LLVS…ELIA), 308 to 328 (SLGI…AILL), and 351 to 371 (ISLV…FAFG).

This sequence belongs to the complex I subunit 1 family. In terms of assembly, NDH-1 is composed of at least 11 different subunits.

The protein localises to the cellular thylakoid membrane. It catalyses the reaction a plastoquinone + NADH + (n+1) H(+)(in) = a plastoquinol + NAD(+) + n H(+)(out). The catalysed reaction is a plastoquinone + NADPH + (n+1) H(+)(in) = a plastoquinol + NADP(+) + n H(+)(out). In terms of biological role, NDH-1 shuttles electrons from an unknown electron donor, via FMN and iron-sulfur (Fe-S) centers, to quinones in the respiratory and/or the photosynthetic chain. The immediate electron acceptor for the enzyme in this species is believed to be plastoquinone. Couples the redox reaction to proton translocation, and thus conserves the redox energy in a proton gradient. The protein is NAD(P)H-quinone oxidoreductase subunit 1 of Prochlorococcus marinus (strain SARG / CCMP1375 / SS120).